Consider the following 259-residue polypeptide: Proteasome subunit alpha 1 (259 aa).

The segment at 231-259 is disordered; that stretch reads LVPAEPAAASESAPEPKPDTETKPADTQD. A compositionally biased stretch (low complexity) spans 233-243; sequence PAEPAAASESA. The span at 244–259 shows a compositional bias: basic and acidic residues; sequence PEPKPDTETKPADTQD.

The protein belongs to the peptidase T1A family. The 20S proteasome core is composed of 14 alpha and 14 beta subunits that assemble into four stacked heptameric rings, resulting in a barrel-shaped structure. The two inner rings, each composed of seven catalytic beta subunits, are sandwiched by two outer rings, each composed of seven alpha subunits. All four combinations of alpha- and beta-subunits (beta2-alpha1, beta2-alpha2, beta1-alpha2 and beta1-alpha1) yield fully assembled and proteolytically active proteasomes. The catalytic chamber with the active sites is on the inside of the barrel. Has probably a gated structure, the ends of the cylinder being occluded by the N-termini of the alpha-subunits. Is likely capped by the proteasome-associated ATPase, ARC. Post-translationally, the N-terminus is blocked.

The protein resides in the cytoplasm. It participates in protein degradation; proteasomal Pup-dependent pathway. Its activity is regulated as follows. The formation of the proteasomal ATPase ARC-20S proteasome complex, likely via the docking of the C-termini of ARC into the intersubunit pockets in the alpha-rings, may trigger opening of the gate for substrate entry. Interconversion between the open-gate and close-gate conformations leads to a dynamic regulation of the 20S proteasome proteolysis activity. Functionally, component of the proteasome core, a large protease complex with broad specificity involved in protein degradation. The R.erythropolis proteasomes are able to cleave oligopeptides after Tyr, Phe and Leu, very poorly after Arg but not after Glu. Thus, displays chymotrypsin-like activity, low trypsin-like activity but no caspase-like activity. This is Proteasome subunit alpha 1 from Rhodococcus erythropolis (Arthrobacter picolinophilus).